The sequence spans 2340 residues: Proto-oncogene tyrosine-protein kinase ROS (2340 aa).

Positions 1–28 are cleaved as a signal peptide; the sequence is MKNICWLTLKLVKFVVLGCIIWISVAQS. The Extracellular segment spans residues 29 to 1854; sequence TVLSSCLTSC…EDGVWITETS (1826 aa). N-linked (GlcNAc...) asparagine glycosylation occurs at N53. Fibronectin type-III domains are found at residues 111–206 and 207–295; these read LPTA…VPET and APLI…PSPS. N334 and N362 each carry an N-linked (GlcNAc...) asparagine glycan. Residues 567–667 enclose the Fibronectin type-III 3 domain; that stretch reads LPGHPQEVSV…APSVGTTLVP (101 aa). N935 and N1011 each carry an N-linked (GlcNAc...) asparagine glycan. 2 consecutive Fibronectin type-III domains span residues 943–1038 and 1039–1146; these read IPDP…SVPS and APEN…TSEI. N1243 is a glycosylation site (N-linked (GlcNAc...) asparagine). 4 consecutive Fibronectin type-III domains span residues 1442 to 1549, 1550 to 1649, 1651 to 1744, and 1745 to 1846; these read ASDM…TKSG, VPGA…VNMF, TPEK…TKAG, and VPSK…LVED. A glycan (N-linked (GlcNAc...) asparagine) is linked at N1676. Residues 1855–1875 form a helical membrane-spanning segment; the sequence is FILTIIVGIFLVATVPLTFVW. The Cytoplasmic segment spans residues 1876-2340; the sequence is HRSLKSHKAS…AHSEHGDVSE (465 aa). In terms of domain architecture, Protein kinase spans 1938–2216; sequence LSLRLLLGSG…QLQLFRNVFL (279 aa). Residues 1944–1952 and K1973 contribute to the ATP site; that span reads LGSGAFGEV. The active-site Proton acceptor is D2072. Phosphotyrosine; by autocatalysis is present on residues Y2267 and Y2327.

It belongs to the protein kinase superfamily. Tyr protein kinase family. Insulin receptor subfamily. As to quaternary structure, interacts with PTPN11; may activate the PI3 kinase-mTOR signaling pathway. Interacts with VAV3; constitutive interaction mediating VAV3 phosphorylation. Interacts with PTPN6 (via SH2 1 domain); the interaction is direct and promotes ROS1 dephosphorylation. Post-translationally, phosphorylated. Probably autophosphorylates. Phosphorylation at Tyr-2267 and/or Tyr-2327 recruits PTPN11. Phosphorylation at Tyr-2267 is required for the interaction with PTPN6 that mediates ROS1 dephosphorylation. Phosphorylation at Tyr-2267 stimulates the kinase activity and the activation of the ERK1 signaling cascade. Expressed by epithelial cells of the caput epididymis (at protein level).

The protein localises to the cell membrane. It carries out the reaction L-tyrosyl-[protein] + ATP = O-phospho-L-tyrosyl-[protein] + ADP + H(+). With respect to regulation, inhibited by dephosphorylation by PTPN6. Receptor tyrosine kinase (RTK) that plays a role in epithelial cell differentiation and regionalization of the proximal epididymal epithelium. NELL2 is an endogenous ligand for ROS1. Upon endogenous stimulation by NELL2, ROS1 activates the intracellular signaling pathway and triggers epididymal epithelial differentiation and subsequent sperm maturation. May activate several downstream signaling pathways related to cell differentiation, proliferation, growth and survival including the PI3 kinase-mTOR signaling pathway. Mediates the phosphorylation of PTPN11, an activator of this pathway. May also phosphorylate and activate the transcription factor STAT3 to control anchorage-independent cell growth. Mediates the phosphorylation and the activation of VAV3, a guanine nucleotide exchange factor regulating cell morphology. May activate other downstream signaling proteins including AKT1, MAPK1, MAPK3, IRS1, and PLCG2. The sequence is that of Proto-oncogene tyrosine-protein kinase ROS (Ros1) from Mus musculus (Mouse).